Consider the following 160-residue polypeptide: MSRRHAAEKRVILPDMKYNSIVLSRFINNIMKEGKKALAEKIVYSAFNKIEKKYRVDPYQTFNNAMHNVKPHLEVTSVRVGGANYQVPTHVDERRGYALASRWIINAASKRSEKMMIDKLAEELFEASNNRGVAIKKKEDTHKMAEANKAFSHFSPKKMK.

It belongs to the universal ribosomal protein uS7 family. Part of the 30S ribosomal subunit. Contacts proteins S9 and S11.

One of the primary rRNA binding proteins, it binds directly to 16S rRNA where it nucleates assembly of the head domain of the 30S subunit. Is located at the subunit interface close to the decoding center, probably blocks exit of the E-site tRNA. The polypeptide is Small ribosomal subunit protein uS7 (Rickettsia massiliae (strain Mtu5)).